A 367-amino-acid polypeptide reads, in one-letter code: dTDP-4-amino-4,6-dideoxy-D-glucose transaminase (367 aa).

Lys184 bears the N6-(pyridoxal phosphate)lysine mark.

Belongs to the DegT/DnrJ/EryC1 family. It depends on pyridoxal 5'-phosphate as a cofactor.

It catalyses the reaction dTDP-4-amino-4,6-dideoxy-D-glucose + 2-oxoglutarate = dTDP-4-dehydro-6-deoxy-alpha-D-glucose + L-glutamate. It participates in bacterial outer membrane biogenesis; lipopolysaccharide biosynthesis. In terms of biological role, catalyzes the conversion of dTDP-4-dehydro-6-deoxy-D-glucose (dTDP-D-Glc4O) to dTDP-4-amino-4,6-dideoxy-D-glucose (dTDP-D-Qui4N). L-glutamine can also be used as amino donor. This is dTDP-4-amino-4,6-dideoxy-D-glucose transaminase (vioA) from Shigella dysenteriae.